Reading from the N-terminus, the 282-residue chain is MAEKNASAVDGAIRVSGMQFSYDVQDPIFFDFNLDLPAGSRCLLVGANGSGKTTLLKILAGKHMVGGKNVVQVLDRSAFHDTELVCSGDLSYLGGSWSKTAGSAGDIPLQGDFSAEHMIFGVEGIDPFRREKLIDLLDINLQWRMHKVSDGQRRRVQICMGLLHPFKVLLLDEVTVDLDVVARMDLLEFFKEECEQRGATIVYATHIFDGLETWASHLAYINGGELKLSAKLDEIKDLKTSPNLLSVVEAWLRSETKVEKKTKKKPVVTSPFMSSRQMAYYR.

Residues 13–248 enclose the ABC transporter domain; that stretch reads IRVSGMQFSY…KTSPNLLSVV (236 aa). An ATP-binding site is contributed by 46 to 53; the sequence is GANGSGKT.

The protein belongs to the ABC transporter superfamily. ABCI family. Expressed in root elongating zone and root meristem, as well as in elongating etiolated hypocotyls.

It localises to the cytoplasm. This is ABC transporter I family member 21 (ABCI21) from Arabidopsis thaliana (Mouse-ear cress).